Reading from the N-terminus, the 106-residue chain is UPF0145 protein MA_3383 (106 aa).

Belongs to the UPF0145 family.

This Methanosarcina acetivorans (strain ATCC 35395 / DSM 2834 / JCM 12185 / C2A) protein is UPF0145 protein MA_3383.